Here is a 349-residue protein sequence, read N- to C-terminus: Dipeptide transport ATP-binding protein DppD (349 aa).

In terms of domain architecture, ABC transporter spans 7–258 (LEVKNLHVNF…PQHPYTWGLL (252 aa)). Residue 43-50 (GESGSGKS) coordinates ATP.

The protein belongs to the ABC transporter superfamily. As to quaternary structure, the complex is composed of two ATP-binding proteins (DppD and DppF), two transmembrane proteins (DppB and DppC) and a solute-binding protein (DppA).

It localises to the cell membrane. The enzyme catalyses a dipeptide(out) + ATP + H2O = a dipeptide(in) + ADP + phosphate + H(+). Its function is as follows. Part of the ABC transporter DppABCDF involved in dipeptide transport. Responsible for energy coupling to the transport system. The chain is Dipeptide transport ATP-binding protein DppD from Lactococcus lactis subsp. cremoris (strain MG1363).